Reading from the N-terminus, the 295-residue chain is ATP synthase gamma chain (295 aa).

Belongs to the ATPase gamma chain family. F-type ATPases have 2 components, CF(1) - the catalytic core - and CF(0) - the membrane proton channel. CF(1) has five subunits: alpha(3), beta(3), gamma(1), delta(1), epsilon(1). CF(0) has three main subunits: a, b and c.

Its subcellular location is the cell inner membrane. Produces ATP from ADP in the presence of a proton gradient across the membrane. The gamma chain is believed to be important in regulating ATPase activity and the flow of protons through the CF(0) complex. The protein is ATP synthase gamma chain of Chlorobium phaeobacteroides (strain BS1).